Consider the following 696-residue polypeptide: DNA ligase (696 aa).

NAD(+) contacts are provided by residues Asp41–Asp45, Ser90–Leu91, and Glu120. Catalysis depends on Lys122, which acts as the N6-AMP-lysine intermediate. 4 residues coordinate NAD(+): Arg143, Glu180, Lys296, and Lys320. Residues Cys414, Cys417, Cys433, and Cys439 each contribute to the Zn(2+) site. The region spanning Ser603–Glu692 is the BRCT domain.

This sequence belongs to the NAD-dependent DNA ligase family. LigA subfamily. Mg(2+) serves as cofactor. Requires Mn(2+) as cofactor.

It catalyses the reaction NAD(+) + (deoxyribonucleotide)n-3'-hydroxyl + 5'-phospho-(deoxyribonucleotide)m = (deoxyribonucleotide)n+m + AMP + beta-nicotinamide D-nucleotide.. Its function is as follows. DNA ligase that catalyzes the formation of phosphodiester linkages between 5'-phosphoryl and 3'-hydroxyl groups in double-stranded DNA using NAD as a coenzyme and as the energy source for the reaction. It is essential for DNA replication and repair of damaged DNA. The polypeptide is DNA ligase (Kineococcus radiotolerans (strain ATCC BAA-149 / DSM 14245 / SRS30216)).